The sequence spans 230 residues: MWAWALLPICLTIWATAGIWIVYGMSVSNGSVNLSDGFPYISLCGTDPPQSCVFGQVLNVGAMLGVWISAIRFQQIRDYNCHSVLNSVSLAMGILCALGTSIVGNFQQSNQLETHLAGAFLAFVIGNIYFWMQTALTYMVKPTHGGCYIGPIRFCLSVACTALIVLMAVFLKMNMKSISAICEWIVAMILFLLYGLFAVDFWHLDGHYFHVKKRTVIPNEMQVSTVTLSI.

A topological domain (cytoplasmic) is located at residue methionine 1. Residues 2-22 form a helical membrane-spanning segment; it reads WAWALLPICLTIWATAGIWIV. Topologically, residues 23 to 50 are extracellular; it reads YGMSVSNGSVNLSDGFPYISLCGTDPPQ. N-linked (GlcNAc...) asparagine glycosylation is found at asparagine 29 and asparagine 33. A helical transmembrane segment spans residues 51 to 71; it reads SCVFGQVLNVGAMLGVWISAI. At 72–83 the chain is on the cytoplasmic side; the sequence is RFQQIRDYNCHS. The helical transmembrane segment at 84–104 threads the bilayer; it reads VLNSVSLAMGILCALGTSIVG. The Extracellular portion of the chain corresponds to 105–115; that stretch reads NFQQSNQLETH. The chain crosses the membrane as a helical span at residues 116–136; it reads LAGAFLAFVIGNIYFWMQTAL. At 137–150 the chain is on the cytoplasmic side; it reads TYMVKPTHGGCYIG. The chain crosses the membrane as a helical span at residues 151–171; the sequence is PIRFCLSVACTALIVLMAVFL. Over 172–183 the chain is Extracellular; that stretch reads KMNMKSISAICE. The helical transmembrane segment at 184–204 threads the bilayer; the sequence is WIVAMILFLLYGLFAVDFWHL. Residues 205–230 lie on the Cytoplasmic side of the membrane; that stretch reads DGHYFHVKKRTVIPNEMQVSTVTLSI.

This sequence belongs to the DRAM/TMEM150 family.

It localises to the cell membrane. The protein resides in the endosome membrane. Its subcellular location is the cytoplasmic vesicle. It is found in the autophagosome membrane. Functionally, modulator of macroautophagy that causes accumulation of autophagosomes under basal conditions and enhances autophagic flux. Represses cell death and promotes long-term clonogenic survival of cells grown in the absence of glucose in a macroautophagy-independent manner. May have some role in extracellular matrix engulfment or growth factor receptor recycling, both of which can modulate cell survival. This Xenopus laevis (African clawed frog) protein is Modulator of macroautophagy TMEM150B-A.